Consider the following 281-residue polypeptide: Probable short-chain type dehydrogenase/reductase blr2146 (281 aa).

10 to 34 (VVTGAGAGIGKACALAIAREGGRVV) serves as a coordination point for NAD(+). Ser146 is a substrate binding site. The active-site Proton acceptor is Tyr159. The interval 261-281 (GNSRAARPAGETAEADAAPRC) is disordered.

This sequence belongs to the short-chain dehydrogenases/reductases (SDR) family.

This is Probable short-chain type dehydrogenase/reductase blr2146 from Bradyrhizobium diazoefficiens (strain JCM 10833 / BCRC 13528 / IAM 13628 / NBRC 14792 / USDA 110).